The chain runs to 256 residues: MLRIADKTFDSHLFTGTGKFASSQLMMEAIRACGSQLVTLAMKRVNLRQHNDAILEPLIAAGVTLLPNTSGAKTAEEAIFAAHLAREALGTNWLKLEIHPDARWLLPDPIETLKAAEKLVQQGFVVLPYCGADPVLCKRLEEVGCAAVMPLGAPIGSNQGLETRAMLEIIIQQATVPVVVDAGIGVPSHAAQALEMGADAVLVNTAIAVADDPVNMAKAFRLAVEAGLLARQSGPGSRSHFAHATSPLTGFLEASE.

Lys-95 acts as the Schiff-base intermediate with DXP in catalysis. Residues Gly-156, 182–183, and 204–205 each bind 1-deoxy-D-xylulose 5-phosphate; these read AG and NT.

The protein belongs to the ThiG family. As to quaternary structure, homotetramer. Forms heterodimers with either ThiH or ThiS.

The protein localises to the cytoplasm. The enzyme catalyses [ThiS sulfur-carrier protein]-C-terminal-Gly-aminoethanethioate + 2-iminoacetate + 1-deoxy-D-xylulose 5-phosphate = [ThiS sulfur-carrier protein]-C-terminal Gly-Gly + 2-[(2R,5Z)-2-carboxy-4-methylthiazol-5(2H)-ylidene]ethyl phosphate + 2 H2O + H(+). The protein operates within cofactor biosynthesis; thiamine diphosphate biosynthesis. Catalyzes the rearrangement of 1-deoxy-D-xylulose 5-phosphate (DXP) to produce the thiazole phosphate moiety of thiamine. Sulfur is provided by the thiocarboxylate moiety of the carrier protein ThiS. In vitro, sulfur can be provided by H(2)S. The sequence is that of Thiazole synthase from Escherichia coli O45:K1 (strain S88 / ExPEC).